The sequence spans 148 residues: uncharacterized protein (148 aa).

The protein belongs to the serpin family. Poxviruses subfamily.

This is an uncharacterized protein from Fowlpox virus (strain NVSL) (FPV).